An 85-amino-acid chain; its full sequence is N.vectensis toxin 1 6 (85 aa).

Residues 1-20 (MASFKIVIVCLALLVAVACA) form the signal peptide. Positions 21–36 (RRRDMMSDDELDYHYS) are excised as a propeptide. 3 disulfides stabilise this stretch: Cys-42–Cys-82, Cys-44–Cys-72, and Cys-65–Cys-83.

The protein belongs to the sea anemone sodium channel inhibitory toxin family. Type II subfamily. As to expression, expressed in ectodermal glands and in clumps outside of the extodermal layer. Is not expressed in nematocytes. In adult female tissues, shows similar expression levels in mesenteries (gametes-producing tissue), tentacles, pharynx and physa.

It is found in the secreted. Functionally, binds to site 3 of voltage-gated sodium channels and inhibits the inactivation process. Is highly active on DmNav1/TipE (drosophila) and is only extremely weakly active on rat Nav1.4-beta-1/SCN4A-SCN1B, and on human Nav1.5-beta-1/SCN5A-beta-1. This reveals high specificity for arthropod over mammalian channels. In vivo, when released into the medium, this recombinant toxin induces impaired swimming, paralysis and death of the crustacean A.nauplii within several hours. Also causes paralysis of cherry shrimps immediately after injection at very low doses. Its effect on zebrafish (D.rerio) larvae is also rapid, since it induces tail twitching accompanied by impaired swimming after 20 minutes and complete paralysis within 45 minutes. It has also been observed to cause death of zebrafish larvae within 1 hour. The sequence is that of N.vectensis toxin 1 6 from Nematostella vectensis (Starlet sea anemone).